A 96-amino-acid polypeptide reads, in one-letter code: Muconolactone Delta-isomerase (96 aa).

The protein belongs to the muconolactone Delta-isomerase family. In terms of assembly, homodecamer.

It catalyses the reaction (S)-muconolactone = (4,5-dihydro-5-oxofuran-2-yl)-acetate. It participates in aromatic compound metabolism; beta-ketoadipate pathway; 5-oxo-4,5-dihydro-2-furylacetate from catechol: step 3/3. The protein is Muconolactone Delta-isomerase (catC) of Pseudomonas aeruginosa (strain ATCC 15692 / DSM 22644 / CIP 104116 / JCM 14847 / LMG 12228 / 1C / PRS 101 / PAO1).